We begin with the raw amino-acid sequence, 1846 residues long: Brefeldin A-inhibited guanine nucleotide-exchange protein 1 (1846 aa).

A DCB; DCB:DCB domain and DCB:HUS domain interaction region spans residues 2 to 224; sequence YEGKKTKNMF…QEAKQMERER (223 aa). A Phosphoserine modification is found at Ser-52. Disordered regions lie at residues 217-248, 264-302, and 347-410; these read AKQMERERHRQQHHLLQSPVSHHEPESPHLRY, DLDPQTHDVDKSLQDDIEPENGSDISSAENEQTEADQAT, and VSAS…SPGA. The segment covering 267-277 has biased composition (basic and acidic residues); sequence PQTHDVDKSLQ. Residues Ser-286, Ser-289, Ser-290, Ser-394, and Ser-407 each carry the phosphoserine modification. The span at 391–406 shows a compositional bias: polar residues; sequence SVSSNDTQESGNSSGP. The tract at residues 554–574 is HUS; DCB:HUS domain interaction; it reads ADAQSVVDIYVNYDCDLNAAN. The disordered stretch occupies residues 631–684; it reads PNSQTTLGQEKPSEQEISEIKHPETINRYGSLNSLESTSSSGIGSYSTQMSGTD. Residues 641 to 655 are compositionally biased toward basic and acidic residues; sequence KPSEQEISEIKHPET. A compositionally biased stretch (low complexity) spans 661 to 681; the sequence is SLNSLESTSSSGIGSYSTQMS. The SEC7 domain occupies 688–877; sequence QFEVLKQQKE…SAIYNEIAGK (190 aa). The short motif at 708–712 is the Nuclear localization signal (NLS) element; sequence KKPKR. Ser-1076, Ser-1563, and Ser-1566 each carry phosphoserine. The tract at residues 1571-1600 is disordered; it reads DSAQPRSSDNRQQAPLVSVSPASEEVSKGR. Over residues 1574–1585 the composition is skewed to polar residues; that stretch reads QPRSSDNRQQAP.

As to quaternary structure, homodimer. Interacts with ARFGEF2/BIG2; both proteins are probably part of the same or very similar macromolecular complexes. Interacts with FKBP2. Interacts with MYO9B. Interacts with PRKAR1A and PRKAR2A. Interacts with PPP1CC. Interacts with NCL, FBL, NUP62 and U3 small nucleolar RNA. Interacts with DPY30. Interacts with PDE3A. Interacts with KANK1. Interacts with TBC1D22A and TBC1D22B. In terms of processing, phosphorylated. In vitro phosphorylated by PKA reducing its GEF activity and dephosphorylated by phosphatase PP1.

It localises to the cytoplasm. Its subcellular location is the perinuclear region. The protein resides in the golgi apparatus. It is found in the trans-Golgi network. The protein localises to the nucleus. It localises to the nucleolus. Its subcellular location is the nucleus matrix. The protein resides in the membrane. Its activity is regulated as follows. Inhibited by brefeldin A. Its function is as follows. Promotes guanine-nucleotide exchange on ARF1 and ARF3. Promotes the activation of ARF1/ARF3 through replacement of GDP with GTP. Involved in vesicular trafficking. Required for the maintenance of Golgi structure; the function may be independent of its GEF activity. Required for the maturation of integrin beta-1 in the Golgi. Involved in the establishment and persistence of cell polarity during directed cell movement in wound healing. Proposed to act as A kinase-anchoring protein (AKAP) and may mediate crosstalk between Arf and PKA pathways. Inhibits GAP activity of MYO9B probably through competitive RhoA binding. The function in the nucleus remains to be determined. This is Brefeldin A-inhibited guanine nucleotide-exchange protein 1 (Arfgef1) from Rattus norvegicus (Rat).